The sequence spans 152 residues: Snaclec agkisacutacin subunit A (152 aa).

The N-terminal stretch at 1–23 (MGRFIFVSFGLLVVFLSLSGTAA) is a signal peptide. In terms of domain architecture, C-type lectin spans 24–152 (DCSSGWSSYE…EQQDPFVCEA (129 aa)). 3 disulfides stabilise this stretch: Cys25–Cys36, Cys53–Cys150, and Cys125–Cys142. 3 residues coordinate Ca(2+): Ser64, Glu66, and Glu70. Glu151 is a Ca(2+) binding site.

The protein belongs to the snaclec family. As to quaternary structure, heterodimer with subunit B of AaACP or agkisacutacin; disulfide-linked. In terms of tissue distribution, expressed by the venom gland.

It localises to the secreted. In terms of biological role, anticoagulant protein which binds to the gamma-carboxyglutamic acid-domain regions of factors IX (F9) and factor X (F10) in the presence of calcium with a 1 to 1 stoichiometry. Also inhibits platelet aggregation by binding to platelet glycoprotein Ibalpha (GP1BA) and functioning as a blocker of von Willebrand factor (VWF). Is devoid of hemorrhagic and lethal activities. Possesses antithrombotic and thrombolytic activities. Also hydrolyzes the Aalpha-chain of fibrinogen (FGA). Does not affect the Bbeta-chain (FGB) and the gamma chain (FGG). This is Snaclec agkisacutacin subunit A from Deinagkistrodon acutus (Hundred-pace snake).